We begin with the raw amino-acid sequence, 271 residues long: 2-aminophenol 1,6-dioxygenase subunit alpha (271 aa).

The protein belongs to the LigB/MhpB extradiol dioxygenase family. As to quaternary structure, the APD complex is a heterotetramer of 2 alpha (CnbCa) and 2 beta (CnbCb) subunits.

Its pathway is xenobiotic degradation; nitrobenzene degradation. It participates in xenobiotic degradation; 4-chloronitrobenzene degradation. Component of the 2-aminophenol 1,6-dioxygenase (APD) complex that catalyzes the ring fission of 2-aminophenol to produce 2-aminomuconic semialdehyde. CnbCa may have a role in the stability of the complex. The complex is also active on other substrates such as 2-amino-5-chlorophenol (68% activity), protocatechuate (33% activity) and catechol (5% activity). Both 2-aminophenol and 2-amino-5-cholorophenol are likely native substrates for this dioxygenase which is involved in the reductive degradation pathway of both nitrobenzene (NB) and 4-chloronitrobenzene (4-CNB), allowing C.testosteroni strain CNB-1 to grow on these compounds as sole source of carbon, nitrogen, and energy. This chain is 2-aminophenol 1,6-dioxygenase subunit alpha, found in Comamonas testosteroni (Pseudomonas testosteroni).